The sequence spans 65 residues: Small ribosomal subunit protein bS21A (65 aa).

This sequence belongs to the bacterial ribosomal protein bS21 family.

In Francisella tularensis subsp. holarctica (strain LVS), this protein is Small ribosomal subunit protein bS21A.